Consider the following 203-residue polypeptide: Apoptosis-associated speck-like protein containing a CARD (203 aa).

The 91-residue stretch at 1–91 (MAESFKEHLQ…DDLLRNTGQS (91 aa)) folds into the Pyrin domain. Residues 112 to 203 (VAFSKVNFID…FLMDDLEDAE (92 aa)) form the CARD domain.

Self-associates (via pyrin and CARD domains). Interacts (via pyrin domain) with caspa (via pyrin domain). Interacts with caspb; the interaction only occurs in the presence of nlrp1. Component of NLRP1 inflammasomes. Inflammasomes are supramolecular complexes that assemble in the cytosol in response to pathogens and other damage-associated signals and play critical roles in innate immunity and inflammation. The NLRP1 inflammasome is composed of the signal sensor nlrp1, and the adapter pycard (asc), which recruit effector pro-inflammatory caspases caspa and/or caspb. The interaction between nlrp1 and pycard is required for the sequential recruitment of caspa and then caspb. Within the complex caspa is preferentially recruited first and this causes the cleavage of pro-il1b into the midformed il1b. This is followed by the recruitment of caspb, which is activated and cleaves the midformed il1b resulting in il1b maturation. Interacts (via pyrin domain) with NLP3X1 (via pyrin domain). Interacts with gbp4. Expressed in the kidney, intestine and gill. Expressed at low levels in the heart.

The protein localises to the cytoplasm. Its subcellular location is the inflammasome. In terms of biological role, functions as a key mediator in apoptosis and inflammation. Promotes caspase-mediated apoptosis. Induces proteolytic processing of caspa and caspa-dependent apoptosis. Involved in innate immune response by acting as an integral adapter in the assembly of various inflammasomes which recruit and activate caspase-1 leading to processing and secretion of pro-inflammatory cytokines. Caspase-1-dependent inflammation leads to macrophage pyroptosis, a form of cell death. The function as activating adapter in different types of inflammasomes is mediated by the pyrin and CARD domains and their homotypic interactions. Clustered PYCARD nucleates the formation of caspase-1 filaments through the interaction of their respective CARD domains, acting as a platform for of caspase-1 polymerization. Also involved in transcriptional activation of cytokines and chemokines independent of the inflammasome. The polypeptide is Apoptosis-associated speck-like protein containing a CARD (pycard) (Danio rerio (Zebrafish)).